The sequence spans 634 residues: Phospholipase B (634 aa).

Residues 1–19 (MSIITTAFALSLLATTAFA) form the signal peptide. A PLA2c domain is found at 46-569 (DCPSNVTWIR…DTWCWAGDDN (524 aa)). N-linked (GlcNAc...) asparagine glycosylation is found at N50, N56, N122, N231, N246, N269, N311, N340, N384, N430, N478, N498, N525, N550, N569, N591, and N603.

The protein belongs to the lysophospholipase family. Post-translationally, N-glycosylated.

It localises to the secreted. It catalyses the reaction a 1-acyl-sn-glycero-3-phosphocholine + H2O = sn-glycerol 3-phosphocholine + a fatty acid + H(+). Functionally, exhibits phospholipase B (PLB), lysophospholipase (LPL) and lysophospholipase/transacylase (LPTA) activities. This is Phospholipase B (PLB1) from Cryptococcus neoformans var. neoformans serotype D (strain JEC21 / ATCC MYA-565) (Filobasidiella neoformans).